Reading from the N-terminus, the 88-residue chain is Metastasis-suppressor KiSS-1 (88 aa).

Residues 1–13 (SVENSRPTGQQLE) are compositionally biased toward polar residues. Residues 1-88 (SVENSRPTGQ…REKDLPNYNW (88 aa)) form a disordered region. Over residues 33 to 55 (SATARLSRRGASLSSPAESSGSP) the composition is skewed to low complexity. Residues 78-88 (QREKDLPNYNW) are compositionally biased toward basic and acidic residues. Tyr-86 bears the Phosphotyrosine mark.

This sequence belongs to the KISS1 family. In terms of tissue distribution, in the hypothalamus, expression increases with puberty in both male and female monkeys. Robust expression in the region of the arcuate nucleus (ARC).

The protein localises to the secreted. Its function is as follows. Metastasis suppressor protein. May regulate events downstream of cell-matrix adhesion, perhaps involving cytoskeletal reorganization. Generates a C-terminally amidated peptide, metastin which functions as the endogenous ligand of the G-protein coupled receptor GPR54. The receptor is essential for normal gonadotropin-released hormone physiology and for puberty. The hypothalamic KiSS1/GPR54 system is a pivotal factor in central regulation of the gonadotropic axis at puberty and in adulthood. This Macaca mulatta (Rhesus macaque) protein is Metastasis-suppressor KiSS-1 (KISS1).